Here is a 256-residue protein sequence, read N- to C-terminus: Thiazole synthase (256 aa).

The Schiff-base intermediate with DXP role is filled by Lys-95. 1-deoxy-D-xylulose 5-phosphate contacts are provided by residues Gly-156, 182 to 183 (AG), and 204 to 205 (NT).

Belongs to the ThiG family. As to quaternary structure, homotetramer. Forms heterodimers with either ThiH or ThiS.

It is found in the cytoplasm. The catalysed reaction is [ThiS sulfur-carrier protein]-C-terminal-Gly-aminoethanethioate + 2-iminoacetate + 1-deoxy-D-xylulose 5-phosphate = [ThiS sulfur-carrier protein]-C-terminal Gly-Gly + 2-[(2R,5Z)-2-carboxy-4-methylthiazol-5(2H)-ylidene]ethyl phosphate + 2 H2O + H(+). Its pathway is cofactor biosynthesis; thiamine diphosphate biosynthesis. Catalyzes the rearrangement of 1-deoxy-D-xylulose 5-phosphate (DXP) to produce the thiazole phosphate moiety of thiamine. Sulfur is provided by the thiocarboxylate moiety of the carrier protein ThiS. In vitro, sulfur can be provided by H(2)S. The sequence is that of Thiazole synthase from Escherichia coli O157:H7.